A 340-amino-acid chain; its full sequence is Heat-inducible transcription repressor HrcA (340 aa).

Belongs to the HrcA family.

Its function is as follows. Negative regulator of class I heat shock genes (grpE-dnaK-dnaJ and groELS operons). Prevents heat-shock induction of these operons. The polypeptide is Heat-inducible transcription repressor HrcA (Mycoplasmopsis synoviae (strain 53) (Mycoplasma synoviae)).